The chain runs to 726 residues: Catalase-peroxidase (726 aa).

A compositionally biased stretch (polar residues) spans 1-12 (MSTPSDQHNTLS). The tract at residues 1–34 (MSTPSDQHNTLSAGKCPFHQGNSNQTAGGGTSSR) is disordered. A cross-link (tryptophyl-tyrosyl-methioninium (Trp-Tyr) (with M-252)) is located at residues 105-226 (WHSAGTYRSA…LGATEMGLIY (122 aa)). H106 acts as the Proton acceptor in catalysis. Positions 226–252 (YVNPEGPNHSGDPASAAPAIRATFGNM) form a cross-link, tryptophyl-tyrosyl-methioninium (Tyr-Met) (with W-105). Residue H267 participates in heme b binding.

This sequence belongs to the peroxidase family. Peroxidase/catalase subfamily. Homodimer or homotetramer. It depends on heme b as a cofactor. Post-translationally, formation of the three residue Trp-Tyr-Met cross-link is important for the catalase, but not the peroxidase activity of the enzyme.

It catalyses the reaction H2O2 + AH2 = A + 2 H2O. The enzyme catalyses 2 H2O2 = O2 + 2 H2O. Its function is as follows. Bifunctional enzyme with both catalase and broad-spectrum peroxidase activity. This is Catalase-peroxidase from Cronobacter sakazakii (strain ATCC BAA-894) (Enterobacter sakazakii).